The chain runs to 796 residues: Probable phosphoketolase (796 aa).

This sequence belongs to the XFP family. Thiamine diphosphate is required as a cofactor.

The sequence is that of Probable phosphoketolase from Streptomyces coelicolor (strain ATCC BAA-471 / A3(2) / M145).